The sequence spans 273 residues: Phosphate import ATP-binding protein PstB (273 aa).

An ABC transporter domain is found at 26–268 (MRGEKVCVFY…PTEKRTQDYI (243 aa)). Position 58–65 (58–65 (GPSGCGKS)) interacts with ATP.

It belongs to the ABC transporter superfamily. Phosphate importer (TC 3.A.1.7) family. As to quaternary structure, the complex is composed of two ATP-binding proteins (PstB), two transmembrane proteins (PstC and PstA) and a solute-binding protein (PstS).

It is found in the cell inner membrane. The enzyme catalyses phosphate(out) + ATP + H2O = ADP + 2 phosphate(in) + H(+). Its function is as follows. Part of the ABC transporter complex PstSACB involved in phosphate import. Responsible for energy coupling to the transport system. This Brucella abortus (strain 2308) protein is Phosphate import ATP-binding protein PstB.